Here is a 258-residue protein sequence, read N- to C-terminus: Tryptophan synthase alpha chain (258 aa).

Active-site proton acceptor residues include glutamate 44 and aspartate 55.

This sequence belongs to the TrpA family. As to quaternary structure, tetramer of two alpha and two beta chains.

The enzyme catalyses (1S,2R)-1-C-(indol-3-yl)glycerol 3-phosphate + L-serine = D-glyceraldehyde 3-phosphate + L-tryptophan + H2O. Its pathway is amino-acid biosynthesis; L-tryptophan biosynthesis; L-tryptophan from chorismate: step 5/5. Functionally, the alpha subunit is responsible for the aldol cleavage of indoleglycerol phosphate to indole and glyceraldehyde 3-phosphate. In Petrotoga mobilis (strain DSM 10674 / SJ95), this protein is Tryptophan synthase alpha chain.